Consider the following 297-residue polypeptide: Ribosomal RNA small subunit methyltransferase A (297 aa).

6 residues coordinate S-adenosyl-L-methionine: Asn31, Leu33, Gly58, Glu79, Asp104, and Asn129.

It belongs to the class I-like SAM-binding methyltransferase superfamily. rRNA adenine N(6)-methyltransferase family. RsmA subfamily.

It is found in the cytoplasm. The catalysed reaction is adenosine(1518)/adenosine(1519) in 16S rRNA + 4 S-adenosyl-L-methionine = N(6)-dimethyladenosine(1518)/N(6)-dimethyladenosine(1519) in 16S rRNA + 4 S-adenosyl-L-homocysteine + 4 H(+). Its function is as follows. Specifically dimethylates two adjacent adenosines (A1518 and A1519) in the loop of a conserved hairpin near the 3'-end of 16S rRNA in the 30S particle. May play a critical role in biogenesis of 30S subunits. The protein is Ribosomal RNA small subunit methyltransferase A of Staphylococcus aureus (strain bovine RF122 / ET3-1).